We begin with the raw amino-acid sequence, 91 residues long: Acylphosphatase (91 aa).

Residues 5-91 (CSKFIVSGHV…EHDYQGFEIL (87 aa)) form the Acylphosphatase-like domain. N38 is an active-site residue.

The protein belongs to the acylphosphatase family.

The catalysed reaction is an acyl phosphate + H2O = a carboxylate + phosphate + H(+). The protein is Acylphosphatase (acyP) of Vibrio cholerae serotype O1 (strain ATCC 39541 / Classical Ogawa 395 / O395).